The primary structure comprises 520 residues: Versicolorin B desaturase (520 aa).

The helical transmembrane segment at 22-42 threads the bilayer; that stretch reads IFTTILSIFGIALSAVAAWGI. 2 N-linked (GlcNAc...) asparagine glycosylation sites follow: Asn-266 and Asn-426. Cys-462 lines the heme pocket.

The protein belongs to the cytochrome P450 family. Requires heme as cofactor.

It localises to the membrane. It catalyses the reaction versicolorin B + NADPH + O2 + H(+) = versicolorin A + NADP(+) + 2 H2O. It participates in mycotoxin biosynthesis. Its function is as follows. Versicolorin B desaturase; part of the fragmented gene cluster that mediates the biosynthesis of dothistromin (DOTH), a polyketide toxin very similar in structure to the aflatoxin precursor, versicolorin B. The first step of the pathway is the conversion of acetate to norsolorinic acid (NOR) and requires the fatty acid synthase subunits hexA and hexB, as well as the polyketide synthase pksA. PksA combines a hexanoyl starter unit and 7 malonyl-CoA extender units to synthesize the precursor NOR. The hexanoyl starter unit is provided to the acyl-carrier protein (ACP) domain by the fungal fatty acid synthase hexA/hexB. The second step is the conversion of NOR to averantin (AVN) and requires the norsolorinic acid ketoreductase nor1, which catalyzes the dehydration of norsolorinic acid to form (1'S)-averantin. The cytochrome P450 monooxygenase avnA then catalyzes the hydroxylation of AVN to 5'hydroxyaverantin (HAVN). The next step is performed by adhA that transforms HAVN to averufin (AVF). Averufin might then be converted to hydroxyversicolorone by cypX and avfA. Hydroxyversicolorone is further converted versiconal hemiacetal acetate (VHA) by moxY. VHA is then the substrate for the versiconal hemiacetal acetate esterase est1 to yield versiconal (VAL). Versicolorin B synthase vbsA then converts VAL to versicolorin B (VERB) by closing the bisfuran ring. Then, the activity of the versicolorin B desaturase verB leads to versicolorin A (VERA). DotB, a predicted chloroperoxidase, may perform epoxidation of the A-ring of VERA. Alternatively, a cytochrome P450, such as cypX or avnA could catalyze this step. It is also possible that another, uncharacterized, cytochrome P450 enzyme is responsible for this step. Opening of the epoxide could potentially be achieved by the epoxide hydrolase epoA. However, epoA seems not to be required for DOTH biosynthesis, but other epoxide hydrolases may have the ability to complement this hydrolysis. Alternatively, opening of the epoxide ring could be achieved non-enzymatically. The next step is the deoxygenation of ring A to yield the 5,8-dihydroxyanthraquinone which is most likely catalyzed by the NADPH dehydrogenase encoded by ver1. The last stages of DOTH biosynthesis are proposed to involve hydroxylation of the bisfuran. OrdB and norB might have oxidative roles here. An alternative possibility is that cytochrome P450 monoogenases such as avnA and cypX might perform these steps in addition to previously proposed steps. In Dothistroma septosporum (strain NZE10 / CBS 128990) (Red band needle blight fungus), this protein is Versicolorin B desaturase.